Here is a 451-residue protein sequence, read N- to C-terminus: MSDFFHSDVLSVSELNAFAKSILENHLAGLWIAGEVSNLTRAASGHYYFSLKDSRAQVRCAMFKGAAARLAQPLKEGDHIEVAGKISIYEARGEFQITVNEVRLKGLGQLYEAYERLKAQLQAEGAFAAERKKPLPVRPQCIGIVTSLAAAALRDVVTTLKRRAPEIPVIVYPAAVQGAGSGFQIAQAIKTASQRAECDVLIVCRGGGSIEDLRAFNEEPVVRAIEACTIPVVSGVGHETDFTLADFVADVRAPTPTGAAELVSPNRQESLHRLVQAQGRLKTVLEQRYFDASQKLDWLARQIRHPRQKLDEQRASIGKLAQTLSYSMTQNLRAHTARFERQTQALQHCRPDVSVYRQDIVRLQTALPAAFSRLLARRRQSLTAQAALLEAVSPQHILERGFSVVKNTRGQVIRNADVLKQGQKLHITFSDGETDVRVSKEQGQQDLFDCI.

This sequence belongs to the XseA family. As to quaternary structure, heterooligomer composed of large and small subunits.

Its subcellular location is the cytoplasm. It catalyses the reaction Exonucleolytic cleavage in either 5'- to 3'- or 3'- to 5'-direction to yield nucleoside 5'-phosphates.. In terms of biological role, bidirectionally degrades single-stranded DNA into large acid-insoluble oligonucleotides, which are then degraded further into small acid-soluble oligonucleotides. This chain is Exodeoxyribonuclease 7 large subunit, found in Neisseria gonorrhoeae (strain ATCC 700825 / FA 1090).